The sequence spans 112 residues: Nitrogenase-stabilizing/protective protein NifW (112 aa).

Belongs to the NifW family. Homotrimer; associates with NifD.

In terms of biological role, may protect the nitrogenase Fe-Mo protein from oxidative damage. In Rhodopseudomonas palustris (strain BisA53), this protein is Nitrogenase-stabilizing/protective protein NifW.